A 262-amino-acid chain; its full sequence is 5'-nucleotidase SurE (262 aa).

Residues aspartate 8, aspartate 9, serine 39, and asparagine 91 each contribute to the a divalent metal cation site.

The protein belongs to the SurE nucleotidase family. A divalent metal cation serves as cofactor.

The protein localises to the cytoplasm. The enzyme catalyses a ribonucleoside 5'-phosphate + H2O = a ribonucleoside + phosphate. Functionally, nucleotidase that shows phosphatase activity on nucleoside 5'-monophosphates. This chain is 5'-nucleotidase SurE, found in Geobacter sulfurreducens (strain ATCC 51573 / DSM 12127 / PCA).